Consider the following 75-residue polypeptide: Small ribosomal subunit protein bS18 (75 aa).

Belongs to the bacterial ribosomal protein bS18 family. In terms of assembly, part of the 30S ribosomal subunit. Forms a tight heterodimer with protein bS6.

In terms of biological role, binds as a heterodimer with protein bS6 to the central domain of the 16S rRNA, where it helps stabilize the platform of the 30S subunit. The sequence is that of Small ribosomal subunit protein bS18 from Chromobacterium violaceum (strain ATCC 12472 / DSM 30191 / JCM 1249 / CCUG 213 / NBRC 12614 / NCIMB 9131 / NCTC 9757 / MK).